The sequence spans 448 residues: Homogentisate 1,2-dioxygenase (448 aa).

Catalysis depends on His-303, which acts as the Proton acceptor. Fe cation is bound by residues His-346 and Glu-352. The homogentisate site is built by Tyr-361 and His-382. Fe cation is bound at residue His-382.

The protein belongs to the homogentisate dioxygenase family. As to quaternary structure, hexamer; dimer of trimers. Fe cation is required as a cofactor.

It catalyses the reaction homogentisate + O2 = 4-maleylacetoacetate + H(+). It functions in the pathway amino-acid degradation; L-phenylalanine degradation; acetoacetate and fumarate from L-phenylalanine: step 4/6. Involved in the catabolism of homogentisate (2,5-dihydroxyphenylacetate or 2,5-OH-PhAc), a central intermediate in the degradation of phenylalanine and tyrosine. Catalyzes the oxidative ring cleavage of the aromatic ring of homogentisate to yield maleylacetoacetate. The protein is Homogentisate 1,2-dioxygenase of Rhodopseudomonas palustris (strain BisB18).